We begin with the raw amino-acid sequence, 469 residues long: MRNGTSANGTTGHAPIARRLFGTDGVRGVANVHPMTAEMALQLGRALAYVVRNGSHRHRIVIGKDTRLSGYMLEQAIASGISSMGVDVMLSGPLPTPGIAFLTESMRADAGVVISASHNPYQDNGIKFFSRDGFKLPDAVELQIEQLVLGESGLEEFHALRPTATRIGKAKRIDDAIGRYVVFLKSIFPKDLTLDGLTIVVDCAHGAAYHVAPAVFEELGAKVIALNVKPDGKNINDGCGAVHPESMAKAIQKHRAHLGLALDGDADRVILADEQGRIVDGDAIMALVGRDLIRQKTLAKRTVVATVMSNLGLERALAGAGGRVVRTAVGDRYVVEEMRRSGYNFGGEQSGHLIFLDHVTTGDGVAAALNVLAVMQREGRPLSELARCFEPVPQALVNVAVKERRPLSDLPEVARVIGSVEKALGKDGRVLVRFSGTENKVRVLVEGTDGKRIRAQADEIADELRKALG.

Serine 117 functions as the Phosphoserine intermediate in the catalytic mechanism. Serine 117, aspartate 263, aspartate 265, and aspartate 267 together coordinate Mg(2+). At serine 117 the chain carries Phosphoserine.

This sequence belongs to the phosphohexose mutase family. Requires Mg(2+) as cofactor. Post-translationally, activated by phosphorylation.

The enzyme catalyses alpha-D-glucosamine 1-phosphate = D-glucosamine 6-phosphate. Its function is as follows. Catalyzes the conversion of glucosamine-6-phosphate to glucosamine-1-phosphate. The polypeptide is Phosphoglucosamine mutase (Anaeromyxobacter sp. (strain Fw109-5)).